Reading from the N-terminus, the 92-residue chain is Small ribosomal subunit protein uS19c (92 aa).

The protein belongs to the universal ribosomal protein uS19 family.

Its subcellular location is the plastid. Functionally, protein S19 forms a complex with S13 that binds strongly to the 16S ribosomal RNA. The polypeptide is Small ribosomal subunit protein uS19c (Cuscuta reflexa (Southern Asian dodder)).